A 315-amino-acid chain; its full sequence is MNPNFLDFEQPIADLQAKIEELRLVGNDNSLNIGDEISRLQDKSKTLTEDIFGKLTSWQIARLARHPKRPYTLDYIEHIFTEFDELHGDRHFSDDAAIVGGVARLEDQPVMVIGHQKGREVREKVRRNFGMPRPEGYRKACRLMEMAERFKMPILTFIDTPGAYPGIDAEERNQSEAIAWNLRVMARLKTPIIATVIGEGGSGGALAIGVCDQLNMLQYSTYAVISPEGCASILWKTAEKAPDAAEAMGITAERLKGLGIVDKVISEPLGGAHRDPAAAAASIRAELSSQLAMLKKFDNEALLKRRYDRLMSYGL.

Residues Leu-40 to Met-293 form the CoA carboxyltransferase C-terminal domain.

This sequence belongs to the AccA family. In terms of assembly, acetyl-CoA carboxylase is a heterohexamer composed of biotin carboxyl carrier protein (AccB), biotin carboxylase (AccC) and two subunits each of ACCase subunit alpha (AccA) and ACCase subunit beta (AccD).

It is found in the cytoplasm. It carries out the reaction N(6)-carboxybiotinyl-L-lysyl-[protein] + acetyl-CoA = N(6)-biotinyl-L-lysyl-[protein] + malonyl-CoA. Its pathway is lipid metabolism; malonyl-CoA biosynthesis; malonyl-CoA from acetyl-CoA: step 1/1. Its function is as follows. Component of the acetyl coenzyme A carboxylase (ACC) complex. First, biotin carboxylase catalyzes the carboxylation of biotin on its carrier protein (BCCP) and then the CO(2) group is transferred by the carboxyltransferase to acetyl-CoA to form malonyl-CoA. This is Acetyl-coenzyme A carboxylase carboxyl transferase subunit alpha from Pseudomonas fluorescens (strain Pf0-1).